A 326-amino-acid chain; its full sequence is Aspartate carbamoyltransferase catalytic subunit (326 aa).

Residues R58 and T59 each contribute to the carbamoyl phosphate site. K86 contacts L-aspartate. Residues R108, H141, and Q144 each coordinate carbamoyl phosphate. L-aspartate-binding residues include R181 and R239. G280 and P281 together coordinate carbamoyl phosphate.

It belongs to the aspartate/ornithine carbamoyltransferase superfamily. ATCase family. In terms of assembly, heterododecamer (2C3:3R2) of six catalytic PyrB chains organized as two trimers (C3), and six regulatory PyrI chains organized as three dimers (R2).

The catalysed reaction is carbamoyl phosphate + L-aspartate = N-carbamoyl-L-aspartate + phosphate + H(+). The protein operates within pyrimidine metabolism; UMP biosynthesis via de novo pathway; (S)-dihydroorotate from bicarbonate: step 2/3. Its function is as follows. Catalyzes the condensation of carbamoyl phosphate and aspartate to form carbamoyl aspartate and inorganic phosphate, the committed step in the de novo pyrimidine nucleotide biosynthesis pathway. The polypeptide is Aspartate carbamoyltransferase catalytic subunit (Synechococcus sp. (strain JA-3-3Ab) (Cyanobacteria bacterium Yellowstone A-Prime)).